A 4576-amino-acid polypeptide reads, in one-letter code: Mucin-2 (4576 aa).

The first 20 residues, 1-20 (MGLPLARLVAACLVLALAKG), serve as a signal peptide directing secretion. Ser-21 carries the phosphoserine modification. In terms of domain architecture, VWFD 1 spans 32–205 (HVCSTWGDFH…KINKPEVQCE (174 aa)). Cystine bridges form between Cys-34-Cys-166, Cys-56-Cys-204, Cys-64-Cys-163, Cys-216-Cys-253, Cys-223-Cys-248, Cys-235-Cys-273, Cys-255-Cys-261, Cys-263-Cys-289, Cys-293-Cys-327, Cys-306-Cys-319, Cys-310-Cys-349, Cys-329-Cys-343, Cys-351-Cys-373, Cys-368-Cys-385, Cys-371-Cys-380, Cys-389-Cys-526, Cys-411-Cys-561, Cys-433-Cys-441, Cys-572-Cys-617, Cys-586-Cys-612, Cys-599-Cys-637, Cys-619-Cys-625, Cys-627-Cys-652, Cys-659-Cys-696, Cys-672-Cys-686, Cys-676-Cys-716, Cys-698-Cys-710, Cys-718-Cys-740, and Cys-738-Cys-747. A Ca(2+)-binding site is contributed by Asp-46. Cu(+) is bound by residues Met-143 and Met-151. Glu-153 lines the Cu(2+) pocket. Asn-160 is a glycosylation site (N-linked (GlcNAc...) asparagine). 3 residues coordinate Ca(2+): Asp-168, Asn-170, and Glu-177. Cu(2+) is bound at residue His-275. Positions 293-349 (CPNNMVYLESSSPCVDTCSHLEVSSLCEEHYMDGCFCPEGTVYDDITGSGCIPVSQC) constitute a TIL domain. His-322 serves as a coordination point for Cu(2+). Cu(+) is bound at residue Met-324. Positions 387-562 (ETCALEGGSH…NTWKAQSSCH (176 aa)) constitute a VWFD 2 domain. Asp-401 contacts Ca(2+). Asn-421 carries N-linked (GlcNAc...) asparagine glycosylation. 5 residues coordinate Ca(2+): Asn-528, Asn-530, Leu-532, Asp-535, and Asp-536. N-linked (GlcNAc...) asparagine glycosylation is present at Asn-668. An N-linked (GlcNAc...) asparagine glycan is attached at Asn-768. 21 disulfide bridges follow: Cys-782–Cys-818, Cys-800–Cys-812, Cys-820–Cys-843, Cys-837–Cys-855, Cys-841–Cys-850, Cys-859–Cys-990, Cys-881–Cys-1025, Cys-890–Cys-987, Cys-907–Cys-914, Cys-1035–Cys-1078, Cys-1049–Cys-1073, Cys-1060–Cys-1100, Cys-1080–Cys-1088, Cys-1090–Cys-1115, Cys-1106–Cys-1135, Cys-1119–Cys-1161, Cys-1143–Cys-1185, Cys-1165–Cys-1179, Cys-1187–Cys-1211, Cys-1206–Cys-1236, and Cys-1209–Cys-1219. Asn-838 carries an N-linked (GlcNAc...) asparagine glycan. In terms of domain architecture, VWFD 3 spans 857 to 1026 (STCSIYGSGH…NSWKEASTCP (170 aa)). Position 871 (Asp-871) interacts with Ca(2+). An N-linked (GlcNAc...) asparagine glycan is attached at Asn-893. Ca(2+)-binding residues include Asn-992, Asp-994, Asn-999, and Asp-1000. Residues Asn-1137 and Asn-1152 are each glycosylated (N-linked (GlcNAc...) asparagine). N-linked (GlcNAc...) asparagine glycosylation is found at Asn-1213, Asn-1228, and Asn-1244. O-linked (GalNAc) threonine glycans are attached at residues Thr-1265, Thr-1268, Thr-1269, Thr-1281, and Thr-1292. Positions 1305, 1308, 1315, 1316, and 1318 each coordinate Ca(2+). Asn-1352 is a glycosylation site (N-linked (GlcNAc...) asparagine). Residues Asp-1375 and Tyr-1376 each contribute to the Ca(2+) site. Tandem repeats lie at residues 1395–1415 (SPTT…PTTL), 1416–1427 (PTSSPVTSSATL), 1428–1437 (PTTSSITSTI), 1438–1453 (SPTT…SPTT), and 1454–1460 (SPTTSPT). The interval 1395–2866 (SPTTSTTTLS…PTTSSTFTTP (1472 aa)) is disordered. Residues 1478–1497 (PSTTSPTTPSTTPSTTSPTT) form a 7B repeat. Residues 1498 to 1510 (PSTTSPTTPTSTS) form an 8A repeat. One copy of the 9B repeat lies at 1530-1556 (SPTTSPTTPSTTSPTISTTTSTISPTT). Residues 1557 to 1572 (PSTTSPNTPSTTSSTI) form a 10A repeat. The stretch at 1573–1588 (PSTTSPTTPSTTSPTI) is one 10B repeat. One copy of the 11A repeat lies at 1589 to 1607 (STTTSTTSPTTPSTTSPTT). One copy of the 11B repeat lies at 1608 to 1634 (PSTTSPTTPSTTSPTISTTTLTTSPTT). Tandem repeats lie at residues 1635-1642 (PSTTSPTT) and 1665-1681 (ISPT…LSTT). 2 N-linked (GlcNAc...) asparagine glycosylation sites follow: Asn-2529 and Asn-2910. Composition is skewed to low complexity over residues 2975–3623 (PSST…GSTP) and 3631–3706 (PGPT…TSPS). Positions 2975-3706 (PSSTTTETPT…SSTSPITSPS (732 aa)) are disordered. N-linked (GlcNAc...) asparagine glycans are attached at residues Asn-3734, Asn-3745, and Asn-3756. Pro residues predominate over residues 3764 to 3774 (STPTPSTPTPT). Positions 3764-3806 (STPTPSTPTPTPSQTTTPSTTSSKSTPSTPQSTSPKSTLSTPT) are disordered. Positions 3775–3806 (PSQTTTPSTTSSKSTPSTPQSTSPKSTLSTPT) are enriched in low complexity. N-linked (GlcNAc...) asparagine glycosylation is found at Asn-3823, Asn-3830, and Asn-3903. In terms of domain architecture, VWFD 4 spans 3880–4063 (CYCTGWGDPH…VNDPSKPHCP (184 aa)). 3 disulfides stabilise this stretch: Cys-3882-Cys-4023, Cys-3904-Cys-4062, and Cys-3928-Cys-3936. N-linked (GlcNAc...) asparagine glycans are attached at residues Asn-3991, Asn-4017, Asn-4028, Asn-4083, Asn-4149, Asn-4183, Asn-4254, Asn-4277, Asn-4351, Asn-4366, Asn-4434, Asn-4465, and Asn-4488. VWFC domains lie at 4213–4282 (CVGP…TSCK) and 4320–4387 (GVCV…KKCQ). 4 disulfide bridges follow: Cys-4471–Cys-4518, Cys-4485–Cys-4532, Cys-4494–Cys-4548, and Cys-4498–Cys-4550. The CTCK domain occupies 4471-4556 (CSAVSVMKEI…SCLCQDTVCG (86 aa)).

In terms of assembly, homomultimer; disulfide-linked. The N- and C-terminus mediate their assembly into higher order structures to form filaments. The CTCK domains of two polypeptides associate in the endoplasmic reticulum to generate intermolecularly disulfide-bonded dimers. These dimers progress to the Golgi apparatus, which is a more acidic environment than the endoplasmic reticulum. Under acidic conditions, the N-termini form non-covalent intermolecular interactions that juxtapose assemblies of the third VWD domain (VWD3) from different CTCK-linked dimers. The VWD3 assemblies then become disulfide bonded to one another to produce long, disulfide-linked polymers that remain highly compact until secretion. Interacts with FCGBP. Interacts with AGR2; disulfide-linked. O-glycosylated. O-glycosylation is required for mucin assembly. Goblet cells synthesize two forms of mucin that differ in branched chain O-glycosylation and the site of production in the colon. Post-translationally, may undergo proteolytic cleavage in the outer mucus layer of the colon, contributing to the expanded volume and loose nature of this layer which allows for bacterial colonization in contrast to the inner mucus layer which is dense and devoid of bacteria. In terms of processing, at low pH of 6 and under, undergoes autocatalytic cleavage in vitro in the N-terminal region of the fourth VWD domain. It is likely that this also occurs in vivo and is triggered by the low pH of the late secretory pathway. Highly expressed in goblet cells of the colon with lower levels in the small intestine and no expression in the stomach (at protein level).

It localises to the secreted. Its function is as follows. Coats the epithelia of the intestines and other mucus membrane-containing organs to provide a protective, lubricating barrier against particles and infectious agents at mucosal surfaces. Major constituent of the colon mucus, which is mainly formed by large polymeric networks of MUC2 secreted by goblet cells that cover the exposed surfaces of intestine. MUC2 networks form hydrogels that guard the underlying epithelium from pathogens and other hazardous matter entering from the outside world, while permitting nutrient absorption and gas exchange. Acts as a divalent copper chaperone that protects intestinal cells from copper toxicity and facilitates nutritional copper unptake into cells. Binds both Cu(2+) and its reduced form, Cu(1+), at two juxtaposed binding sites: Cu(2+), once reduced to Cu(1+) by vitamin C (ascorbate) or other dietary antioxidants, transits to the other binding site. MUC2-bound Cu(1+) is protected from oxidation in aerobic environments, and can be released for nutritional delivery to cells. Mucin gels store antimicrobial molecules that participate in innate immunity. Mucin glycoproteins also house and feed the microbiome, lubricate tissue surfaces, and may facilitate the removal of contaminants and waste products from the body. Goblet cells synthesize two forms of MUC2 mucin that differ in branched chain O-glycosylation and the site of production in the colon: a (1) 'thick' mucus that wraps the microbiota to form fecal pellets is produced in the proximal, ascending colon. 'Thick' mucus transits along the descending colon and is lubricated by a (2) 'thin' MUC2 mucus produced in the distal colon which adheres to the 'thick' mucus. The sequence is that of Mucin-2 from Mus musculus (Mouse).